The primary structure comprises 564 residues: Pyruvate decarboxylase (564 aa).

Pyruvate-binding residues include aspartate 28 and histidine 115. Thiamine diphosphate-binding positions include threonine 390 and 413–415 (GSI). Aspartate 444 serves as a coordination point for Mg(2+). Thiamine diphosphate is bound by residues 445 to 446 (GS) and 471 to 476 (NDGYTI). Residues asparagine 471 and glycine 473 each contribute to the Mg(2+) site. Residue glutamate 477 coordinates pyruvate.

This sequence belongs to the TPP enzyme family. In terms of assembly, homotetramer. Mg(2+) serves as cofactor. Thiamine diphosphate is required as a cofactor.

The enzyme catalyses a 2-oxocarboxylate + H(+) = an aldehyde + CO2. The catalysed reaction is pyruvate + H(+) = acetaldehyde + CO2. The polypeptide is Pyruvate decarboxylase (PDC1) (Kluyveromyces marxianus (Yeast)).